We begin with the raw amino-acid sequence, 408 residues long: 2-acyl-4-prenylphloroglucinol 6-prenyltransferase, chloroplastic (408 aa).

The N-terminal 46 residues, 1 to 46 (MELSSACNLSLKPNYYYYPTSLFPSNNSYNNLKASSYYQTQRPIKC), are a transit peptide targeting the chloroplast. A run of 9 helical transmembrane segments spans residues 119–139 (PIPF…ELLK), 146–166 (WQLM…HIYI), 193–213 (SVKS…LLMI), 217–237 (CGLF…MYSV), 257–277 (IGIG…GLPF), 281–301 (PPFT…SILK), 326–346 (IVLV…GVAI), 355–375 (YIMI…TWLL), and 388–408 (YYHF…FIST).

Belongs to the UbiA prenyltransferase family. As to quaternary structure, homo- and heteromer. Interacts with PT1L, forming a functional metabolon. Requires Mg(2+) as cofactor. Expressed in trichomes.

Its subcellular location is the plastid. It is found in the chloroplast membrane. The catalysed reaction is a 2-acyl-4-prenylphloroglucinol + dimethylallyl diphosphate = a 2-acyl-4,6-diprenylphloroglucinol + diphosphate. The enzyme catalyses a 2-acyl-4,6-diprenylphloroglucinol + dimethylallyl diphosphate = a 2-acyl-4,6,6-triprenylphloroglucinol + diphosphate. It functions in the pathway secondary metabolite biosynthesis. Involved in the biosynthesis of prenylated phenolics natural products which contribute to the bitter taste of beer and display broad biological activities. Catalyzes the two last prenylation steps in the beta-bitter acid pathway. Uses dimethylallyl diphosphate (DMAPP) as the prenyl donor. The protein is 2-acyl-4-prenylphloroglucinol 6-prenyltransferase, chloroplastic of Humulus lupulus (European hop).